We begin with the raw amino-acid sequence, 155 residues long: Ribosomal RNA large subunit methyltransferase H (155 aa).

S-adenosyl-L-methionine-binding positions include Leu-72, Gly-103, and 122-127; that span reads LGRMVW.

It belongs to the RNA methyltransferase RlmH family. In terms of assembly, homodimer.

It is found in the cytoplasm. The enzyme catalyses pseudouridine(1915) in 23S rRNA + S-adenosyl-L-methionine = N(3)-methylpseudouridine(1915) in 23S rRNA + S-adenosyl-L-homocysteine + H(+). Its function is as follows. Specifically methylates the pseudouridine at position 1915 (m3Psi1915) in 23S rRNA. This is Ribosomal RNA large subunit methyltransferase H from Cereibacter sphaeroides (strain KD131 / KCTC 12085) (Rhodobacter sphaeroides).